The sequence spans 499 residues: Glycerol kinase (499 aa).

ADP is bound at residue Thr-11. ATP-binding residues include Thr-11, Ser-12, and Ser-13. Thr-11 is a sn-glycerol 3-phosphate binding site. ADP is bound at residue Arg-15. Positions 81, 82, 133, and 242 each coordinate sn-glycerol 3-phosphate. Glycerol contacts are provided by Arg-81, Glu-82, Tyr-133, Asp-242, and Gln-243. The ADP site is built by Thr-264 and Gly-309. The ATP site is built by Thr-264, Gly-309, Gln-313, and Gly-414. Gly-414 and Asn-418 together coordinate ADP.

The protein belongs to the FGGY kinase family.

It carries out the reaction glycerol + ATP = sn-glycerol 3-phosphate + ADP + H(+). Its pathway is polyol metabolism; glycerol degradation via glycerol kinase pathway; sn-glycerol 3-phosphate from glycerol: step 1/1. Inhibited by fructose 1,6-bisphosphate (FBP). Its function is as follows. Key enzyme in the regulation of glycerol uptake and metabolism. Catalyzes the phosphorylation of glycerol to yield sn-glycerol 3-phosphate. The chain is Glycerol kinase from Methylibium petroleiphilum (strain ATCC BAA-1232 / LMG 22953 / PM1).